A 361-amino-acid polypeptide reads, in one-letter code: Transcription factor TCP10 (361 aa).

A TCP domain is found at 29-87; that stretch reads RKDRHSKVFTSKGPRDRRVRLSAHTAIQFYDVQDRLGYDRPSKAVDWLIKKAKTAIDKL. Disordered stretches follow at residues 220 to 259 and 295 to 317; these read DLTM…QPSM and SWDH…SMFA. The span at 295–304 shows a compositional bias: basic and acidic residues; the sequence is SWDHHQTTSD.

As to quaternary structure, interacts with AHP1, AHP2 and AHP3. Interacts with SPL. In terms of tissue distribution, mostly detected in lateral organs, such as leaves and flowers. Expressed in cotyledons, particularly in the vascular region, in leaves, roots, stems, buds, flowers and immature siliques.

The protein localises to the nucleus. In terms of biological role, plays a pivotal role in the control of morphogenesis of shoot organs by negatively regulating the expression of boundary-specific genes such as CUC genes, probably through the induction of miRNA (e.g. miR164). Participates in ovule development. The chain is Transcription factor TCP10 (TCP10) from Arabidopsis thaliana (Mouse-ear cress).